Here is a 318-residue protein sequence, read N- to C-terminus: Transaldolase (318 aa).

The Schiff-base intermediate with substrate role is filled by K132.

It belongs to the transaldolase family. Type 1 subfamily. Homodimer.

It is found in the cytoplasm. It carries out the reaction D-sedoheptulose 7-phosphate + D-glyceraldehyde 3-phosphate = D-erythrose 4-phosphate + beta-D-fructose 6-phosphate. It functions in the pathway carbohydrate degradation; pentose phosphate pathway; D-glyceraldehyde 3-phosphate and beta-D-fructose 6-phosphate from D-ribose 5-phosphate and D-xylulose 5-phosphate (non-oxidative stage): step 2/3. Transaldolase is important for the balance of metabolites in the pentose-phosphate pathway. This Shewanella woodyi (strain ATCC 51908 / MS32) protein is Transaldolase.